A 288-amino-acid polypeptide reads, in one-letter code: uncharacterized protein (288 aa).

It to M.bovis Mb1522c, M.leprae ML1804 and M.avium MAV321.

This is an uncharacterized protein from Mycobacterium tuberculosis (strain ATCC 25618 / H37Rv).